The sequence spans 423 residues: Histidine--tRNA ligase (423 aa).

Belongs to the class-II aminoacyl-tRNA synthetase family.

The protein localises to the cytoplasm. It catalyses the reaction tRNA(His) + L-histidine + ATP = L-histidyl-tRNA(His) + AMP + diphosphate + H(+). The sequence is that of Histidine--tRNA ligase from Picrophilus torridus (strain ATCC 700027 / DSM 9790 / JCM 10055 / NBRC 100828 / KAW 2/3).